Reading from the N-terminus, the 449-residue chain is Tubulin alpha-2 chain (449 aa).

Q11 serves as a coordination point for GTP. K40 is modified (N6-acetyllysine). GTP-binding residues include E71, S140, G144, T145, T179, N206, and N228. Position 71 (E71) interacts with Mg(2+). Residue E254 is part of the active site.

Belongs to the tubulin family. In terms of assembly, dimer of alpha and beta chains. A typical microtubule is a hollow water-filled tube with an outer diameter of 25 nm and an inner diameter of 15 nM. Alpha-beta heterodimers associate head-to-tail to form protofilaments running lengthwise along the microtubule wall with the beta-tubulin subunit facing the microtubule plus end conferring a structural polarity. Microtubules usually have 13 protofilaments but different protofilament numbers can be found in some organisms and specialized cells. It depends on Mg(2+) as a cofactor. Undergoes a tyrosination/detyrosination cycle, the cyclic removal and re-addition of a C-terminal tyrosine residue by the enzymes tubulin tyrosine carboxypeptidase (TTCP) and tubulin tyrosine ligase (TTL), respectively. Post-translationally, acetylation of alpha chains at Lys-40 stabilizes microtubules and affects affinity and processivity of microtubule motors. This modification has a role in multiple cellular functions, ranging from cell motility, cell cycle progression or cell differentiation to intracellular trafficking and signaling. During the early stages of oogenesis lky/Alpha-tubulin N-acetyltransferase 2 is the main acetyltransferase responsible for Lys-40 acetylation in germline cells while Atat/alpha-tubulin N-acetyltransferase 1 is the main acetyltransferase responsible for Lys-40 acetylation in somatic cells.

The protein localises to the cytoplasm. Its subcellular location is the cytoskeleton. It catalyses the reaction GTP + H2O = GDP + phosphate + H(+). Functionally, tubulin is the major constituent of microtubules, a cylinder consisting of laterally associated linear protofilaments composed of alpha- and beta-tubulin heterodimers. Microtubules grow by the addition of GTP-tubulin dimers to the microtubule end, where a stabilizing cap forms. Below the cap, tubulin dimers are in GDP-bound state, owing to GTPase activity of alpha-tubulin. The chain is Tubulin alpha-2 chain (alphaTub85E) from Drosophila melanogaster (Fruit fly).